The chain runs to 252 residues: Triosephosphate isomerase (252 aa).

9–11 (NWK) lines the substrate pocket. Histidine 95 serves as the catalytic Electrophile. Glutamate 167 acts as the Proton acceptor in catalysis. Substrate is bound by residues glycine 173, serine 213, and 234–235 (GG).

The protein belongs to the triosephosphate isomerase family. As to quaternary structure, homodimer.

The protein localises to the cytoplasm. It carries out the reaction D-glyceraldehyde 3-phosphate = dihydroxyacetone phosphate. It functions in the pathway carbohydrate biosynthesis; gluconeogenesis. The protein operates within carbohydrate degradation; glycolysis; D-glyceraldehyde 3-phosphate from glycerone phosphate: step 1/1. In terms of biological role, involved in the gluconeogenesis. Catalyzes stereospecifically the conversion of dihydroxyacetone phosphate (DHAP) to D-glyceraldehyde-3-phosphate (G3P). The polypeptide is Triosephosphate isomerase (Lactiplantibacillus plantarum (strain ATCC BAA-793 / NCIMB 8826 / WCFS1) (Lactobacillus plantarum)).